We begin with the raw amino-acid sequence, 493 residues long: Dipeptide permease D (493 aa).

The next 13 membrane-spanning stretches (helical) occupy residues 14-34 (VVAL…LLIL), 49-69 (ELFS…GYLA), 91-111 (LVLG…AIIV), 138-158 (GGFS…PIAC), 167-187 (WAMG…IFLC), 212-232 (NWGW…VLFW), 235-255 (WSVY…AKIY), 267-287 (LGLI…AQQG), 312-332 (MFQS…AWLV), 344-364 (IWGK…ILTL), 379-399 (LMVL…PVAM), 413-433 (VLTG…AGVI), and 458-478 (VFEQ…LIWL).

This sequence belongs to the major facilitator superfamily. Proton-dependent oligopeptide transporter (POT/PTR) (TC 2.A.17) family. DtpD subfamily.

The protein resides in the cell inner membrane. In terms of biological role, probable proton-dependent permease that transports dipeptides. This chain is Dipeptide permease D, found in Salmonella paratyphi C (strain RKS4594).